A 318-amino-acid chain; its full sequence is Glycine--tRNA ligase alpha subunit (318 aa).

This sequence belongs to the class-II aminoacyl-tRNA synthetase family. In terms of assembly, tetramer of two alpha and two beta subunits.

The protein resides in the cytoplasm. The enzyme catalyses tRNA(Gly) + glycine + ATP = glycyl-tRNA(Gly) + AMP + diphosphate. The chain is Glycine--tRNA ligase alpha subunit from Chelativorans sp. (strain BNC1).